Here is a 372-residue protein sequence, read N- to C-terminus: Ciliary neurotrophic factor receptor subunit alpha (372 aa).

The signal sequence occupies residues 1–22 (MAASVPWACCAVLAAAAAAVYT). Positions 27–104 (PQEAPHVQYE…WHLRHQVLLH (78 aa)) constitute an Ig-like C2-type domain. Cys46 and Cys89 are oxidised to a cystine. N-linked (GlcNAc...) asparagine glycans are attached at residues Asn60, Asn70, Asn142, Asn190, and Asn261. 2 Fibronectin type-III domains span residues 108–205 (PPRE…VKPD) and 206–306 (PPEN…TEEP). Positions 290–294 (WSDWS) match the WSXWS motif motif. The disordered stretch occupies residues 301 to 339 (PWTEEPRHLTTEAQAPETTTSTTSSLAPPPTTKICDPGE). The span at 311–326 (TEAQAPETTTSTTSSL) shows a compositional bias: low complexity. Residue Ser342 is the site of GPI-anchor amidated serine attachment. Positions 343–372 (GGGPSIPFLTSVPVTLVLAAAAATANNLLI) are cleaved as a propeptide — removed in mature form.

This sequence belongs to the type I cytokine receptor family. Type 3 subfamily. As to quaternary structure, forms a heterotrimer with LIFR and IL6ST. Interacts with heterodimeric neurotropic cytokine composed of CLCF1/CLC and CRLF1/CLF-1. Either alone or in complex with the heterodimer CLCF1-CRLF1 interacts with SORL1; this interaction may promote internalization and lysosomal degradation. In terms of tissue distribution, nervous system.

It is found in the cell membrane. Binds to CNTF. The alpha subunit provides the receptor specificity. This Rattus norvegicus (Rat) protein is Ciliary neurotrophic factor receptor subunit alpha (Cntfr).